Here is a 33-residue protein sequence, read N- to C-terminus: Dermaseptin-H9 (33 aa).

Leu33 bears the Leucine amide mark.

Belongs to the frog skin active peptide (FSAP) family. Dermaseptin subfamily. As to expression, expressed by the skin glands.

Its subcellular location is the secreted. Its function is as follows. Has antimicrobial activity. This chain is Dermaseptin-H9, found in Pithecopus hypochondrialis (Orange-legged leaf frog).